The primary structure comprises 182 residues: uncharacterized protein (182 aa).

Residues 17–34 (LSLVLFAVLSVLPLGGCA) form a helical membrane-spanning segment. 2 TPR repeats span residues 89-122 (VDAAIRLTKALVAQKRPHEALQVLDNVLVVTPDN) and 123-156 (LRALNAKAVILDIEGRHDAAQELYRQALETNPEN).

Its subcellular location is the membrane. This is an uncharacterized protein from Sinorhizobium fredii (strain NBRC 101917 / NGR234).